Here is an 87-residue protein sequence, read N- to C-terminus: Large ribosomal subunit protein bL31B (87 aa).

The protein belongs to the bacterial ribosomal protein bL31 family. Type B subfamily. In terms of assembly, part of the 50S ribosomal subunit.

This Escherichia coli O9:H4 (strain HS) protein is Large ribosomal subunit protein bL31B.